We begin with the raw amino-acid sequence, 206 residues long: LexA repressor (206 aa).

Positions 28–48 (RAEIARRLGFKSANAAEEHLK) form a DNA-binding region, H-T-H motif. Residues serine 123 and lysine 160 each act as for autocatalytic cleavage activity in the active site.

It belongs to the peptidase S24 family. In terms of assembly, homodimer.

The enzyme catalyses Hydrolysis of Ala-|-Gly bond in repressor LexA.. Functionally, represses a number of genes involved in the response to DNA damage (SOS response), including recA and lexA. In the presence of single-stranded DNA, RecA interacts with LexA causing an autocatalytic cleavage which disrupts the DNA-binding part of LexA, leading to derepression of the SOS regulon and eventually DNA repair. In Shewanella halifaxensis (strain HAW-EB4), this protein is LexA repressor.